A 203-amino-acid chain; its full sequence is ATP-dependent Clp protease proteolytic subunit 2 (203 aa).

The Nucleophile role is filled by Ser100. Residue His125 is part of the active site.

This sequence belongs to the peptidase S14 family. In terms of assembly, fourteen ClpP subunits assemble into 2 heptameric rings which stack back to back to give a disk-like structure with a central cavity, resembling the structure of eukaryotic proteasomes.

The protein resides in the cytoplasm. It carries out the reaction Hydrolysis of proteins to small peptides in the presence of ATP and magnesium. alpha-casein is the usual test substrate. In the absence of ATP, only oligopeptides shorter than five residues are hydrolyzed (such as succinyl-Leu-Tyr-|-NHMec, and Leu-Tyr-Leu-|-Tyr-Trp, in which cleavage of the -Tyr-|-Leu- and -Tyr-|-Trp bonds also occurs).. Cleaves peptides in various proteins in a process that requires ATP hydrolysis. Has a chymotrypsin-like activity. Plays a major role in the degradation of misfolded proteins. The sequence is that of ATP-dependent Clp protease proteolytic subunit 2 from Nocardia farcinica (strain IFM 10152).